Here is a 512-residue protein sequence, read N- to C-terminus: ATP synthase subunit alpha (512 aa).

169-176 is an ATP binding site; sequence GDRQTGKT.

This sequence belongs to the ATPase alpha/beta chains family. In terms of assembly, F-type ATPases have 2 components, CF(1) - the catalytic core - and CF(0) - the membrane proton channel. CF(1) has five subunits: alpha(3), beta(3), gamma(1), delta(1), epsilon(1). CF(0) has three main subunits: a(1), b(2) and c(9-12). The alpha and beta chains form an alternating ring which encloses part of the gamma chain. CF(1) is attached to CF(0) by a central stalk formed by the gamma and epsilon chains, while a peripheral stalk is formed by the delta and b chains.

It localises to the cell inner membrane. The catalysed reaction is ATP + H2O + 4 H(+)(in) = ADP + phosphate + 5 H(+)(out). Functionally, produces ATP from ADP in the presence of a proton gradient across the membrane. The alpha chain is a regulatory subunit. The polypeptide is ATP synthase subunit alpha (Aromatoleum aromaticum (strain DSM 19018 / LMG 30748 / EbN1) (Azoarcus sp. (strain EbN1))).